Here is a 188-residue protein sequence, read N- to C-terminus: Actin-related protein 2/3 complex subunit 3 (188 aa).

The protein belongs to the ARPC3 family. As to quaternary structure, component of the Arp2/3 complex.

Its subcellular location is the cytoplasm. The protein localises to the cytoskeleton. Functions as a component of the Arp2/3 complex which is involved in regulation of actin polymerization and together with an activating nucleation-promoting factor (NPF) mediates the formation of branched actin networks. The polypeptide is Actin-related protein 2/3 complex subunit 3 (Entamoeba histolytica (strain ATCC 30459 / HM-1:IMSS / ABRM)).